The primary structure comprises 232 residues: MKIGIIGAMEEEVTLLRDKIDNRQTITLGGCEIYTGQLNGTEVALLKSGIGKVAAALGATLLLEHCKPDVIINTGSAGGLASTLKVGDIVVSDEARYHDADVTAFGYEYGQLPGCPAGFKADDKLIAAAESCIRELNLNAVRGLIVSGDAFINGSVGLAKIRHNFPDAVAVEMEATAIAHVCYNFSVPFVVVRAISDVADQQSHLSFDEFLAVAAKQSTLMVETLVQKLAHG.

Glu12 (proton acceptor) is an active-site residue. Residues Gly78, Ile152, and Met173–Glu174 each bind substrate. Asp197 acts as the Proton donor in catalysis.

It belongs to the PNP/UDP phosphorylase family. MtnN subfamily. Homodimer.

It catalyses the reaction S-adenosyl-L-homocysteine + H2O = S-(5-deoxy-D-ribos-5-yl)-L-homocysteine + adenine. It carries out the reaction S-methyl-5'-thioadenosine + H2O = 5-(methylsulfanyl)-D-ribose + adenine. The catalysed reaction is 5'-deoxyadenosine + H2O = 5-deoxy-D-ribose + adenine. The protein operates within amino-acid biosynthesis; L-methionine biosynthesis via salvage pathway; S-methyl-5-thio-alpha-D-ribose 1-phosphate from S-methyl-5'-thioadenosine (hydrolase route): step 1/2. Catalyzes the irreversible cleavage of the glycosidic bond in both 5'-methylthioadenosine (MTA) and S-adenosylhomocysteine (SAH/AdoHcy) to adenine and the corresponding thioribose, 5'-methylthioribose and S-ribosylhomocysteine, respectively. Also cleaves 5'-deoxyadenosine, a toxic by-product of radical S-adenosylmethionine (SAM) enzymes, into 5-deoxyribose and adenine. Thus, is required for in vivo function of the radical SAM enzymes biotin synthase and lipoic acid synthase, that are inhibited by 5'-deoxyadenosine accumulation. This Salmonella enteritidis PT4 (strain P125109) protein is 5'-methylthioadenosine/S-adenosylhomocysteine nucleosidase.